A 142-amino-acid chain; its full sequence is Protein CPn_0742/CP_0003/CPj0742/CpB0770 (142 aa).

Positions 115 to 142 (LHPTKESKRPKQKLSSTKKNKKKNWIPL) are disordered. Positions 124–142 (PKQKLSSTKKNKKKNWIPL) are enriched in basic residues.

Belongs to the chlamydial CPn_0742/CT_635/TC_0003 family.

The chain is Protein CPn_0742/CP_0003/CPj0742/CpB0770 from Chlamydia pneumoniae (Chlamydophila pneumoniae).